We begin with the raw amino-acid sequence, 140 residues long: Small ribosomal subunit protein uS12 (140 aa).

Disordered stretches follow at residues Thr-36–Lys-56 and Thr-117–Glu-140.

It belongs to the universal ribosomal protein uS12 family. Part of the 30S ribosomal subunit. Contacts proteins S8 and S17. May interact with IF1 in the 30S initiation complex.

Its function is as follows. With S4 and S5 plays an important role in translational accuracy. Functionally, interacts with and stabilizes bases of the 16S rRNA that are involved in tRNA selection in the A site and with the mRNA backbone. Located at the interface of the 30S and 50S subunits, it traverses the body of the 30S subunit contacting proteins on the other side and probably holding the rRNA structure together. The combined cluster of proteins S8, S12 and S17 appears to hold together the shoulder and platform of the 30S subunit. This chain is Small ribosomal subunit protein uS12, found in Malacoplasma penetrans (strain HF-2) (Mycoplasma penetrans).